Consider the following 181-residue polypeptide: MAVFEGSFVNASQFRLAVVIGRFNDLVCEKLLAGCQDCLKRHGVDPDPQGTQVDYAWVPGSFEIPLVARQLALTGRYDAIICLGAVIRGQTPHFDYVASEVAKGVAATSLQTGIPIAFGVLTVDNLQQALERAGIKSNLGWNYALSALEMASLMHQIRSTTGEVPRQTLPLAAAPSNFAGT.

Residues Phe23, 61–63, and 85–87 each bind 5-amino-6-(D-ribitylamino)uracil; these read SFE and AVI. 90–91 serves as a coordination point for (2S)-2-hydroxy-3-oxobutyl phosphate; sequence QT. His93 acts as the Proton donor in catalysis. Phe118 contributes to the 5-amino-6-(D-ribitylamino)uracil binding site. A (2S)-2-hydroxy-3-oxobutyl phosphate-binding site is contributed by Arg132.

The protein belongs to the DMRL synthase family.

It carries out the reaction (2S)-2-hydroxy-3-oxobutyl phosphate + 5-amino-6-(D-ribitylamino)uracil = 6,7-dimethyl-8-(1-D-ribityl)lumazine + phosphate + 2 H2O + H(+). It participates in cofactor biosynthesis; riboflavin biosynthesis; riboflavin from 2-hydroxy-3-oxobutyl phosphate and 5-amino-6-(D-ribitylamino)uracil: step 1/2. Catalyzes the formation of 6,7-dimethyl-8-ribityllumazine by condensation of 5-amino-6-(D-ribitylamino)uracil with 3,4-dihydroxy-2-butanone 4-phosphate. This is the penultimate step in the biosynthesis of riboflavin. This Synechococcus elongatus (strain ATCC 33912 / PCC 7942 / FACHB-805) (Anacystis nidulans R2) protein is 6,7-dimethyl-8-ribityllumazine synthase.